The sequence spans 101 residues: Protein S100-A7-like 2 (101 aa).

EF-hand domains lie at 13–48 and 50–85; these read IVAM…SGCE and SDMD…ITID. Residues Asp-63, Asn-65, Asp-67, Lys-69, and Glu-74 each contribute to the Ca(2+) site. 2 residues coordinate Zn(2+): His-87 and His-91.

This sequence belongs to the S-100 family.

The sequence is that of Protein S100-A7-like 2 (S100A7L2) from Homo sapiens (Human).